The primary structure comprises 514 residues: Chromosomal replication initiator protein DnaA (514 aa).

A domain I, interacts with DnaA modulators region spans residues 1-90; sequence MSVELWQQCV…KRSRTPRAAI (90 aa). The tract at residues 91-177 is domain II; that stretch reads VPSQTHVAPP…QVEGALKHTS (87 aa). Residues 178-394 are domain III, AAA+ region; sequence YLNRTFTFEN…GALKRVIAHS (217 aa). ATP contacts are provided by G222, G224, K225, and T226. A domain IV, binds dsDNA region spans residues 395 to 514; it reads HFMGRPITIE…YKNLLRTLTT (120 aa).

Belongs to the DnaA family. As to quaternary structure, oligomerizes as a right-handed, spiral filament on DNA at oriC.

It is found in the cytoplasm. Its function is as follows. Plays an essential role in the initiation and regulation of chromosomal replication. ATP-DnaA binds to the origin of replication (oriC) to initiate formation of the DNA replication initiation complex once per cell cycle. Binds the DnaA box (a 9 base pair repeat at the origin) and separates the double-stranded (ds)DNA. Forms a right-handed helical filament on oriC DNA; dsDNA binds to the exterior of the filament while single-stranded (ss)DNA is stabiized in the filament's interior. The ATP-DnaA-oriC complex binds and stabilizes one strand of the AT-rich DNA unwinding element (DUE), permitting loading of DNA polymerase. After initiation quickly degrades to an ADP-DnaA complex that is not apt for DNA replication. Binds acidic phospholipids. The sequence is that of Chromosomal replication initiator protein DnaA from Pseudomonas aeruginosa (strain LESB58).